Reading from the N-terminus, the 521-residue chain is Bifunctional purine biosynthesis protein PurH (521 aa).

Positions 1–145 (MIKQALISVS…KNHRDVTVVV (145 aa)) constitute an MGS-like domain.

The protein belongs to the PurH family.

The catalysed reaction is (6R)-10-formyltetrahydrofolate + 5-amino-1-(5-phospho-beta-D-ribosyl)imidazole-4-carboxamide = 5-formamido-1-(5-phospho-D-ribosyl)imidazole-4-carboxamide + (6S)-5,6,7,8-tetrahydrofolate. It catalyses the reaction IMP + H2O = 5-formamido-1-(5-phospho-D-ribosyl)imidazole-4-carboxamide. The protein operates within purine metabolism; IMP biosynthesis via de novo pathway; 5-formamido-1-(5-phospho-D-ribosyl)imidazole-4-carboxamide from 5-amino-1-(5-phospho-D-ribosyl)imidazole-4-carboxamide (10-formyl THF route): step 1/1. Its pathway is purine metabolism; IMP biosynthesis via de novo pathway; IMP from 5-formamido-1-(5-phospho-D-ribosyl)imidazole-4-carboxamide: step 1/1. The sequence is that of Bifunctional purine biosynthesis protein PurH from Burkholderia thailandensis (strain ATCC 700388 / DSM 13276 / CCUG 48851 / CIP 106301 / E264).